We begin with the raw amino-acid sequence, 570 residues long: Dihydroxy-acid dehydratase (570 aa).

[2Fe-2S] cluster is bound at residue Cys-61. Asp-94 provides a ligand contact to Mg(2+). Cys-135 lines the [2Fe-2S] cluster pocket. Mg(2+) contacts are provided by Asp-136 and Lys-137. An N6-carboxylysine modification is found at Lys-137. Cys-207 is a [2Fe-2S] cluster binding site. Position 459 (Glu-459) interacts with Mg(2+). Ser-485 serves as the catalytic Proton acceptor.

This sequence belongs to the IlvD/Edd family. As to quaternary structure, homodimer. Requires [2Fe-2S] cluster as cofactor. Mg(2+) is required as a cofactor.

It catalyses the reaction (2R)-2,3-dihydroxy-3-methylbutanoate = 3-methyl-2-oxobutanoate + H2O. The catalysed reaction is (2R,3R)-2,3-dihydroxy-3-methylpentanoate = (S)-3-methyl-2-oxopentanoate + H2O. Its pathway is amino-acid biosynthesis; L-isoleucine biosynthesis; L-isoleucine from 2-oxobutanoate: step 3/4. It functions in the pathway amino-acid biosynthesis; L-valine biosynthesis; L-valine from pyruvate: step 3/4. Its function is as follows. Functions in the biosynthesis of branched-chain amino acids. Catalyzes the dehydration of (2R,3R)-2,3-dihydroxy-3-methylpentanoate (2,3-dihydroxy-3-methylvalerate) into 2-oxo-3-methylpentanoate (2-oxo-3-methylvalerate) and of (2R)-2,3-dihydroxy-3-methylbutanoate (2,3-dihydroxyisovalerate) into 2-oxo-3-methylbutanoate (2-oxoisovalerate), the penultimate precursor to L-isoleucine and L-valine, respectively. The protein is Dihydroxy-acid dehydratase of Lactococcus lactis subsp. cremoris (strain MG1363).